A 1438-amino-acid polypeptide reads, in one-letter code: Lysophospholipase NTE1 (1438 aa).

Residues 1 to 25 (MDSDTSSADFHSTETLVSTPKYSYG) lie on the Cytoplasmic side of the membrane. The helical transmembrane segment at 26-46 (VLINVILLVSWTCFRVVNWFL) threads the bilayer. The Lumenal segment spans residues 47–64 (VTLPSILLGMLSKTFQIT). The chain crosses the membrane as a helical span at residues 65–85 (LSLSSILMFVVAVTAICFLVV). Residues 86–1438 (RYKYLTRYSR…HVSLSRRNSI (1353 aa)) are Cytoplasmic-facing. Positions 432–450 (YETQTIPNESEDSPTIQRS) are enriched in polar residues. The tract at residues 432–464 (YETQTIPNESEDSPTIQRSSLRRRASHSTSLRK) is disordered. A nucleoside 3',5'-cyclic phosphate-binding positions include 590–720 (GDDS…LTID) and 707–856 (RLKR…VANR). The PNPLA domain maps to 1131-1295 (LVLGGGGSRG…LDNLPVSEMK (165 aa)). A GXGXXG motif is present at residues 1135–1140 (GGGSRG). The short motif at 1162-1166 (GTSIG) is the GXSXG element. Ser-1164 serves as the catalytic Nucleophile. Asp-1282 serves as the catalytic Proton acceptor. The DGA/G motif lies at 1282 to 1284 (DGG).

The protein belongs to the NTE family.

The protein localises to the endoplasmic reticulum membrane. The catalysed reaction is a 1-acyl-sn-glycero-3-phosphocholine + H2O = sn-glycerol 3-phosphocholine + a fatty acid + H(+). Inhibited by organophosphorus esters. Functionally, intracellular phospholipase B that catalyzes the double deacylation of phosphatidylcholine (PC) to glycerophosphocholine (GroPCho). Plays an important role in membrane lipid homeostasis. Responsible for the rapid PC turnover in response to inositol, elevated temperatures, or when choline is present in the growth medium. This is Lysophospholipase NTE1 (NTE1) from Meyerozyma guilliermondii (strain ATCC 6260 / CBS 566 / DSM 6381 / JCM 1539 / NBRC 10279 / NRRL Y-324) (Yeast).